The chain runs to 144 residues: Large ribosomal subunit protein uL15 (144 aa).

Positions M1–V44 are disordered. Positions T23–Q35 are enriched in gly residues.

Belongs to the universal ribosomal protein uL15 family. Part of the 50S ribosomal subunit.

Functionally, binds to the 23S rRNA. This Pediococcus pentosaceus (strain ATCC 25745 / CCUG 21536 / LMG 10740 / 183-1w) protein is Large ribosomal subunit protein uL15.